The primary structure comprises 393 residues: Phosphoglycerate kinase (393 aa).

Residues 21–23 (DLN), Arg-36, 59–62 (HLGR), Arg-113, and Arg-146 each bind substrate. Residues Lys-197, Glu-319, and 345-348 (GGDT) contribute to the ATP site.

It belongs to the phosphoglycerate kinase family. As to quaternary structure, monomer.

It is found in the cytoplasm. The catalysed reaction is (2R)-3-phosphoglycerate + ATP = (2R)-3-phospho-glyceroyl phosphate + ADP. The protein operates within carbohydrate degradation; glycolysis; pyruvate from D-glyceraldehyde 3-phosphate: step 2/5. The sequence is that of Phosphoglycerate kinase from Nitratidesulfovibrio vulgaris (strain ATCC 29579 / DSM 644 / CCUG 34227 / NCIMB 8303 / VKM B-1760 / Hildenborough) (Desulfovibrio vulgaris).